A 504-amino-acid polypeptide reads, in one-letter code: Aspartyl/glutamyl-tRNA(Asn/Gln) amidotransferase subunit B (504 aa).

This sequence belongs to the GatB/GatE family. GatB subfamily. Heterotrimer of A, B and C subunits.

It carries out the reaction L-glutamyl-tRNA(Gln) + L-glutamine + ATP + H2O = L-glutaminyl-tRNA(Gln) + L-glutamate + ADP + phosphate + H(+). The enzyme catalyses L-aspartyl-tRNA(Asn) + L-glutamine + ATP + H2O = L-asparaginyl-tRNA(Asn) + L-glutamate + ADP + phosphate + 2 H(+). Allows the formation of correctly charged Asn-tRNA(Asn) or Gln-tRNA(Gln) through the transamidation of misacylated Asp-tRNA(Asn) or Glu-tRNA(Gln) in organisms which lack either or both of asparaginyl-tRNA or glutaminyl-tRNA synthetases. The reaction takes place in the presence of glutamine and ATP through an activated phospho-Asp-tRNA(Asn) or phospho-Glu-tRNA(Gln). This is Aspartyl/glutamyl-tRNA(Asn/Gln) amidotransferase subunit B from Tropheryma whipplei (strain TW08/27) (Whipple's bacillus).